Consider the following 408-residue polypeptide: CinA-like protein (408 aa).

It belongs to the CinA family.

In Anaeromyxobacter dehalogenans (strain 2CP-1 / ATCC BAA-258), this protein is CinA-like protein.